Reading from the N-terminus, the 173-residue chain is Crossover junction endodeoxyribonuclease RuvC (173 aa).

Residues Asp8, Glu69, and Asp141 contribute to the active site. Mg(2+) contacts are provided by Asp8, Glu69, and Asp141.

The protein belongs to the RuvC family. In terms of assembly, homodimer which binds Holliday junction (HJ) DNA. The HJ becomes 2-fold symmetrical on binding to RuvC with unstacked arms; it has a different conformation from HJ DNA in complex with RuvA. In the full resolvosome a probable DNA-RuvA(4)-RuvB(12)-RuvC(2) complex forms which resolves the HJ. It depends on Mg(2+) as a cofactor.

The protein resides in the cytoplasm. It catalyses the reaction Endonucleolytic cleavage at a junction such as a reciprocal single-stranded crossover between two homologous DNA duplexes (Holliday junction).. Its function is as follows. The RuvA-RuvB-RuvC complex processes Holliday junction (HJ) DNA during genetic recombination and DNA repair. Endonuclease that resolves HJ intermediates. Cleaves cruciform DNA by making single-stranded nicks across the HJ at symmetrical positions within the homologous arms, yielding a 5'-phosphate and a 3'-hydroxyl group; requires a central core of homology in the junction. The consensus cleavage sequence is 5'-(A/T)TT(C/G)-3'. Cleavage occurs on the 3'-side of the TT dinucleotide at the point of strand exchange. HJ branch migration catalyzed by RuvA-RuvB allows RuvC to scan DNA until it finds its consensus sequence, where it cleaves and resolves the cruciform DNA. This chain is Crossover junction endodeoxyribonuclease RuvC, found in Stenotrophomonas maltophilia (strain R551-3).